A 287-amino-acid polypeptide reads, in one-letter code: Shikimate dehydrogenase (NADP(+)) (287 aa).

Shikimate is bound by residues 20–22 (SRS) and threonine 67. Residue lysine 71 is the Proton acceptor of the active site. Residue glutamate 84 coordinates NADP(+). Residues asparagine 93 and aspartate 108 each contribute to the shikimate site. Residues 132–136 (GAGGA), 156–161 (NRTAAR), and methionine 226 each bind NADP(+). Tyrosine 228 is a binding site for shikimate. Glycine 250 provides a ligand contact to NADP(+).

The protein belongs to the shikimate dehydrogenase family. Homodimer.

The enzyme catalyses shikimate + NADP(+) = 3-dehydroshikimate + NADPH + H(+). It functions in the pathway metabolic intermediate biosynthesis; chorismate biosynthesis; chorismate from D-erythrose 4-phosphate and phosphoenolpyruvate: step 4/7. Functionally, involved in the biosynthesis of the chorismate, which leads to the biosynthesis of aromatic amino acids. Catalyzes the reversible NADPH linked reduction of 3-dehydroshikimate (DHSA) to yield shikimate (SA). The protein is Shikimate dehydrogenase (NADP(+)) of Bordetella parapertussis (strain 12822 / ATCC BAA-587 / NCTC 13253).